A 110-amino-acid chain; its full sequence is Non-specific lipid-transfer protein 4 (110 aa).

The N-terminal stretch at 1–17 (CVVLVMCMVVIAPMAEG) is a signal peptide. Intrachain disulfides connect Cys-21/Cys-68, Cys-31/Cys-45, Cys-46/Cys-91, and Cys-66/Cys-105.

It belongs to the plant LTP family.

Plant non-specific lipid-transfer proteins transfer phospholipids as well as galactolipids across membranes. May play a role in wax or cutin deposition in the cell walls of expanding epidermal cells and certain secretory tissues. This chain is Non-specific lipid-transfer protein 4, found in Lens culinaris (Lentil).